We begin with the raw amino-acid sequence, 309 residues long: HPr kinase/phosphorylase (309 aa).

Active-site residues include His138 and Lys159. 153–160 (GDSGIGKS) serves as a coordination point for ATP. Ser160 lines the Mg(2+) pocket. The active-site Proton acceptor; for phosphorylation activity. Proton donor; for dephosphorylation activity is Asp177. An important for the catalytic mechanism of both phosphorylation and dephosphorylation region spans residues 201–210 (LEIRGVGIID). Glu202 contacts Mg(2+). Arg243 is a catalytic residue. The interval 264–269 (PVKTGR) is important for the catalytic mechanism of dephosphorylation.

The protein belongs to the HPrK/P family. In terms of assembly, homohexamer. It depends on Mg(2+) as a cofactor.

It catalyses the reaction [HPr protein]-L-serine + ATP = [HPr protein]-O-phospho-L-serine + ADP + H(+). The enzyme catalyses [HPr protein]-O-phospho-L-serine + phosphate + H(+) = [HPr protein]-L-serine + diphosphate. Its function is as follows. Catalyzes the ATP- as well as the pyrophosphate-dependent phosphorylation of a specific serine residue in HPr, a phosphocarrier protein of the phosphoenolpyruvate-dependent sugar phosphotransferase system (PTS). HprK/P also catalyzes the pyrophosphate-producing, inorganic phosphate-dependent dephosphorylation (phosphorolysis) of seryl-phosphorylated HPr (P-Ser-HPr). The two antagonistic activities of HprK/P are regulated by several intracellular metabolites, which change their concentration in response to the absence or presence of rapidly metabolisable carbon sources (glucose, fructose, etc.) in the growth medium. Therefore, by controlling the phosphorylation state of HPr, HPrK/P is a sensor enzyme that plays a major role in the regulation of carbon metabolism and sugar transport: it mediates carbon catabolite repression (CCR), and regulates PTS-catalyzed carbohydrate uptake and inducer exclusion. The polypeptide is HPr kinase/phosphorylase (Streptococcus thermophilus (strain CNRZ 1066)).